The primary structure comprises 73 residues: UPF0435 protein Lm4b_01721 (73 aa).

It belongs to the UPF0435 family.

The protein is UPF0435 protein Lm4b_01721 of Listeria monocytogenes serotype 4b (strain CLIP80459).